The sequence spans 133 residues: Small ribosomal subunit protein uS8 (133 aa).

This sequence belongs to the universal ribosomal protein uS8 family. Part of the 30S ribosomal subunit. Contacts proteins S5 and S12.

In terms of biological role, one of the primary rRNA binding proteins, it binds directly to 16S rRNA central domain where it helps coordinate assembly of the platform of the 30S subunit. The chain is Small ribosomal subunit protein uS8 from Parasynechococcus marenigrum (strain WH8102).